A 41-amino-acid chain; its full sequence is Replication-associated protein (41 aa).

In terms of biological role, involved in viral RNA replication. This chain is Replication-associated protein, found in Potato leafroll virus (strain Potato/Scotland/strain 1/1984) (PLrV).